Reading from the N-terminus, the 425-residue chain is Mothers against decapentaplegic homolog 3 (425 aa).

An N-acetylserine modification is found at Ser-2. Thr-8 is subject to Phosphothreonine; by CDK2 and CDK4. Residues 10–136 (PIVKRLLGWK…YQRVETPVLP (127 aa)) form the MH1 domain. Lys-33 is covalently cross-linked (Glycyl lysine isopeptide (Lys-Gly) (interchain with G-Cter in ubiquitin)). Cys-64 is a Zn(2+) binding site. Lys-81 is covalently cross-linked (Glycyl lysine isopeptide (Lys-Gly) (interchain with G-Cter in ubiquitin)). Zn(2+)-binding residues include Cys-109, Cys-121, and His-126. The linker stretch occupies residues 137-231 (PVLVPRHTEI…QPVTYCEPAF (95 aa)). A compositionally biased stretch (polar residues) spans 165–177 (NFPAGIEPQSNIP). The tract at residues 165–208 (NFPAGIEPQSNIPETPPPGYLSEDGETSDHQMNHSMDAGSPNLS) is disordered. Thr-179 carries the post-translational modification Phosphothreonine; by CDK2, CDK4 and MAPK. The residue at position 204 (Ser-204) is a Phosphoserine; by GSK3 and MAPK. Ser-208 is subject to Phosphoserine; by MAPK. Phosphoserine; by CDK2 and CDK4 is present on Ser-213. The 194-residue stretch at 232-425 (WCSISYYELN…SPSIRCSSVS (194 aa)) folds into the MH2 domain. The segment at 271-324 (LGLLSNVNRNAAVELTRRHIGRGVRLYYIGGEVFAECLSDSAIFVQSPNCNQRY) is sufficient for interaction with XPO4. The residue at position 378 (Lys-378) is an N6-acetyllysine. Ser-416 carries the post-translational modification Phosphoserine. Ser-418 bears the Phosphoserine; by CK1 mark. Phosphoserine; by TGFBR1 is present on residues Ser-422, Ser-423, and Ser-425.

Belongs to the dwarfin/SMAD family. Monomer; in the absence of TGF-beta. Homooligomer; in the presence of TGF-beta. Heterotrimer; forms a heterotrimer in the presence of TGF-beta consisting of two molecules of C-terminally phosphorylated SMAD2 or SMAD3 and one of SMAD4 to form the transcriptionally active SMAD2/SMAD3-SMAD4 complex. Part of a complex consisting of MAGI2/ARIP1, ACVR2A, ACVR1B and SMAD3. Forms a complex with SMAD2 and TRIM33 upon addition of TGF-beta. Found in a complex composed of SMAD3, RAN and XPO4; within the complex interacts directly with XPO4. Component of the multimeric complex SMAD3/SMAD4/JUN/FOS which forms at the AP1 promoter site; required for synergistic transcriptional activity in response to TGF-beta. Part of a ternary complex composed of SMAD3, ITCH/AIP4 and NEDD9/HEF1; within the complex NEDD9/HEF1 interacts (via N-terminus) with ITCH/AIP4; the complex mediates ubiquitination and proteasomal degradation of NEDD9/HEF1. Interacts with NEDD9; the interaction promotes NEDD9 ubiquitination and proteasomal degradation. Interacts (via an N-terminal domain) with JUN (via its basic DNA binding and leucine zipper domains); this interaction is essential for DNA binding and cooperative transcriptional activity in response to TGF-beta. Identified in a complex that contains at least ZNF451, SMAD2, SMAD3 and SMAD4. Interacts with PPM1A; the interaction dephosphorylates SMAD3 in the C-terminal SXS motif leading to disruption of the SMAD2/3-SMAD4 complex, nuclear export and termination of TGF-beta signaling. Interacts (via MH2 domain) with ZMIZ1 (via SP-RING-type domain); in the TGF-beta signaling pathway increases the activity of the SMAD3/SMAD4 transcriptional complex. Interacts (when phosphorylated) with RNF111; RNF111 acts as an enhancer of the transcriptional responses by mediating ubiquitination and degradation of SMAD3 inhibitors. Interacts (dephosphorylated form via the MH1 and MH2 domains) with RANBP3 (via its C-terminal R domain); the interaction results in the export of dephosphorylated SMAD3 out of the nucleus and termination of the TGF-beta signaling. Interacts (via MH2 domain) with LEMD3; the interaction represses SMAD3 transcriptional activity through preventing the formation of the heteromeric complex with SMAD4 and translocation to the nucleus. Interacts (via the linker region) with EP300 (C-terminal); the interaction promotes SMAD3 acetylation and is enhanced by TGF-beta phosphorylation in the C-terminal of SMAD3. This interaction can be blocked by competitive binding of adenovirus oncoprotein E1A to the same C-terminal site on EP300, which then results in partially inhibited SMAD3/SMAD4 transcriptional activity. Interacts with TGFBR1. Interacts with TGFB1I1. Interacts with PRDM16. Interacts with SNW1. Interacts (via MH2 domain) with ZFYVE9. Interacts with HDAC1. Interacts with TGIF2. Interacts with SKOR1. Interacts with SKOR2. Interacts with DACH1; the interaction inhibits the TGF-beta signaling. Interacts with RBPMS. Interacts (via MH2 domain) with MECOM. Interacts with WWTR1 (via its coiled-coil domain). Interacts with SKI; the interaction represses SMAD3 transcriptional activity. Interacts with MEN1. Interacts with IL1F7. Interaction with CSNK1G2. Interacts with PDPK1 (via PH domain). Interacts with DAB2; the interactions are enhanced upon TGF-beta stimulation. Interacts with USP15. Interacts with PPP5C; the interaction decreases SMAD3 phosphorylation and protein levels. Interacts with LDLRAD4 (via the SMAD interaction motif). Interacts with PMEPA1. Interacts with ZNF451. Interacts with ZFHX3. Interacts weakly with ZNF8. Interacts with STUB1, HSPA1A, HSPA1B, HSP90AA1 and HSP90AB1. Interacts with YAP1 (when phosphorylated at 'Ser-55'). Interacts with MAGI2/ARIP1. Interacts (via MH2 domain) with CITED2 (via C-terminus). Interacts with HGS. Interacts with WWP1. Interacts with TTRAP. Interacts with FOXL2. Interacts with PML. Interacts with NEDD4L; the interaction requires TGF-beta stimulation. Interacts with ZC3H3. Interacts with TGIF. Interacts with CREBBP. Interacts with ATF2. Interacts with NEDD9; the interaction is inhibited by oxidation of NEDD9. Interacts with MTMR4; negatively regulates TGF-beta signaling through SMAD3 dephosphorylation and retention in endosomes. Post-translationally, phosphorylated on serine and threonine residues. Enhanced phosphorylation in the linker region on Thr-179, Ser-204 and Ser-208 on EGF and TGF-beta treatment. Ser-208 is the main site of MAPK-mediated phosphorylation. CDK-mediated phosphorylation occurs in a cell-cycle dependent manner and inhibits both the transcriptional activity and antiproliferative functions of SMAD3. This phosphorylation is inhibited by flavopiridol. Maximum phosphorylation at the G(1)/S junction. Also phosphorylated on serine residues in the C-terminal SXS motif by TGFBR1 and ACVR1. TGFBR1-mediated phosphorylation at these C-terminal sites is required for interaction with SMAD4, nuclear location and transactivational activity, and appears to be a prerequisite for the TGF-beta mediated phosphorylation in the linker region. Dephosphorylated in the C-terminal SXS motif by PPM1A. This dephosphorylation disrupts the interaction with SMAD4, promotes nuclear export and terminates TGF-beta-mediated signaling. Phosphorylation at Ser-418 by CSNK1G2/CK1 promotes ligand-dependent ubiquitination and subsequent proteasome degradation, thus inhibiting SMAD3-mediated TGF-beta responses. Phosphorylated by PDPK1. In terms of processing, acetylation in the nucleus by EP300 in the MH2 domain regulates positively its transcriptional activity and is enhanced by TGF-beta. Poly-ADP-ribosylated by PARP1 and PARP2. ADP-ribosylation negatively regulates SMAD3 transcriptional responses during the course of TGF-beta signaling. Post-translationally, ubiquitinated. Monoubiquitinated, leading to prevent DNA-binding. Deubiquitination by USP15 alleviates inhibition and promotes activation of TGF-beta target genes. Ubiquitinated by RNF111, leading to its degradation: only SMAD3 proteins that are 'in use' are targeted by RNF111, RNF111 playing a key role in activating SMAD3 and regulating its turnover. Undergoes STUB1-mediated ubiquitination and degradation. Highly expressed in the brain and ovary. Detected in the pyramidal cells of the hippocampus, granule cells of the dentate gyrus, granular cells of the cerebral cortex and the granulosa cells of the ovary.

Its subcellular location is the cytoplasm. The protein localises to the nucleus. In terms of biological role, receptor-regulated SMAD (R-SMAD) that is an intracellular signal transducer and transcriptional modulator activated by TGF-beta (transforming growth factor) and activin type 1 receptor kinases. Binds the TRE element in the promoter region of many genes that are regulated by TGF-beta and, on formation of the SMAD3/SMAD4 complex, activates transcription. Also can form a SMAD3/SMAD4/JUN/FOS complex at the AP-1/SMAD site to regulate TGF-beta-mediated transcription. Has an inhibitory effect on wound healing probably by modulating both growth and migration of primary keratinocytes and by altering the TGF-mediated chemotaxis of monocytes. This effect on wound healing appears to be hormone-sensitive. Regulator of chondrogenesis and osteogenesis and inhibits early healing of bone fractures. Positively regulates PDPK1 kinase activity by stimulating its dissociation from the 14-3-3 protein YWHAQ which acts as a negative regulator. The chain is Mothers against decapentaplegic homolog 3 (SMAD3) from Sus scrofa (Pig).